The primary structure comprises 171 residues: Photosystem I assembly protein Ycf3 (171 aa).

TPR repeat units follow at residues 35-68 (AFTYYRDGMSAQSEGEYAEALQNYYKAMRLEIDP), 72-105 (SYILYNIGLIHTSNGEHAKALEYYFQALERNPSL), and 120-153 (GEQAIQQGDPGTSEIWFDKAAEYWKQAIALAPNN).

It belongs to the Ycf3 family.

It localises to the plastid. The protein resides in the chloroplast thylakoid membrane. In terms of biological role, essential for the assembly of the photosystem I (PSI) complex. May act as a chaperone-like factor to guide the assembly of the PSI subunits. This chain is Photosystem I assembly protein Ycf3, found in Psilotum nudum (Whisk fern).